The following is a 488-amino-acid chain: Acetyl-coenzyme A carboxylase carboxyl transferase subunit beta, chloroplastic (488 aa).

A CoA carboxyltransferase N-terminal domain is found at leucine 227–asparagine 488. Zn(2+) contacts are provided by cysteine 231, cysteine 234, cysteine 247, and cysteine 250. Residues cysteine 231–cysteine 250 form a C4-type zinc finger.

Belongs to the AccD/PCCB family. Acetyl-CoA carboxylase is a heterohexamer composed of biotin carboxyl carrier protein, biotin carboxylase and 2 subunits each of ACCase subunit alpha and ACCase plastid-coded subunit beta (accD). Zn(2+) serves as cofactor. As to expression, accumulates in fatty acids synthesizing tissues such as embryos, expanding leaves, flower buds, flowers, and developing siliques.

It is found in the plastid. The protein resides in the chloroplast membrane. The protein localises to the chloroplast stroma. The enzyme catalyses N(6)-carboxybiotinyl-L-lysyl-[protein] + acetyl-CoA = N(6)-biotinyl-L-lysyl-[protein] + malonyl-CoA. It functions in the pathway lipid metabolism; malonyl-CoA biosynthesis; malonyl-CoA from acetyl-CoA: step 1/1. Its function is as follows. Component of the acetyl coenzyme A carboxylase (ACC) complex. Biotin carboxylase (BC) catalyzes the carboxylation of biotin on its carrier protein (BCCP) and then the CO(2) group is transferred by the transcarboxylase to acetyl-CoA to form malonyl-CoA. This is Acetyl-coenzyme A carboxylase carboxyl transferase subunit beta, chloroplastic from Arabidopsis thaliana (Mouse-ear cress).